A 205-amino-acid chain; its full sequence is Imidazoleglycerol-phosphate dehydratase (205 aa).

Residues 1-27 (MKQASPRAGGAKARRGQVARKTKETDV) form a disordered region.

This sequence belongs to the imidazoleglycerol-phosphate dehydratase family.

It localises to the cytoplasm. It carries out the reaction D-erythro-1-(imidazol-4-yl)glycerol 3-phosphate = 3-(imidazol-4-yl)-2-oxopropyl phosphate + H2O. Its pathway is amino-acid biosynthesis; L-histidine biosynthesis; L-histidine from 5-phospho-alpha-D-ribose 1-diphosphate: step 6/9. In Anaeromyxobacter sp. (strain Fw109-5), this protein is Imidazoleglycerol-phosphate dehydratase.